Here is a 284-residue protein sequence, read N- to C-terminus: Circadian clock oscillator protein KaiA (284 aa).

The psR domain, binds oxidized quinones stretch occupies residues 1–135 (MLSQIAICIW…LRLAPVETMA (135 aa)). Residues 1 to 164 (MLSQIAICIW…DLAQRLQERL (164 aa)) form the KaiA N-terminal domain. Residues 165-173 (GYLGVYYKR) form a flexible linker region. One can recognise a KaiA C-terminal domain in the interval 174 to 282 (DPDRFLRNLP…CEMYRRSIPR (109 aa)).

This sequence belongs to the KaiA family. In terms of assembly, homodimer. The KaiABC complex composition changes during the circadian cycle to control KaiC phosphorylation. Complexes KaiC(6), KaiA(2-4):KaiC(6), KaiB(6):KaiC(6) and KaiC(6):KaiB(6):KaiA(12) are among the most important forms, many form cooperatively. The KaiA:KaiB complex is only found at 20-24 hours in the circadian cycle (subjective night). Binds to the C-terminal A-loop of KaiC via a coiled-coil structure. KaiA and CikA compete for binding to KaiB(fs). CikA copurifies with this protein in the clock complex. Interacts with LdpA.

Its activity is regulated as follows. Binding of oxidized quinones (produced as darkness falls) prevents KaiA from stimulating KaiC autophosphorylation. Its function is as follows. Key component of the KaiABC oscillator complex, which constitutes the main circadian regulator in cyanobacteria. Complex composition changes during the circadian cycle to control KaiC phosphorylation. KaiA stimulates KaiC autophosphorylation, while KaiB sequesters KaiA, leading to KaiC autodephosphorylation. KaiA binding to the KaiC CII domain during the subjective day yields KaiA(2-4):KaiC(6) complexes which stimulate KaiC autophosphorylation. A KaiA dimer is sufficient to enhance KaiC hexamer phosphorylation. Phospho-Ser-431 KaiC accumulation triggers binding of KaiB during the subjective night to form the KaiB(6):KaiC(6) complex, leading to changes in the output regulators CikA and SasA. KaiB(6):KaiC(6) formation exposes a site for KaiA binding on KaiB that sequesters KaiA from KaiC's CII domain, making the KaiC(6):KaiB(6):KaiA(12) complex resulting in KaiC autodephosphorylation. Complete dephosphorylation of KaiC leads to dissociation of KaiA(2):KaiB(1), completing 1 cycle of the Kai oscillator. Circadian oscillations can be generated in vitro by incubating KaiA, KaiB and KaiC with 1 mM ATP. The cycle is self-sustainable for at least 3 cycles and resistant to temperature changes. A very robust clock is reconstituted with KaiA, KaiB, KaiC, SasA, CikA and RpaA; output is measured by transcription from an appropriate reporter. In terms of biological role, kaiA binds oxidized quinones via its N-terminal PsR domain and is able to sense redox signals directly; quinone analog DBMIB (2,5-dibromo-3-methyl-6-isopropyl-p-benzoquinone) blocks KaiA stimulation of KaiC phosphorylation. The homodimer binds up to 8 quinones in the crystal structure, 3 in the PsR domain and 1 via the C-terminal helical bundle. Binding of oxidized quinone to the KaiA C-terminal domain reduces the phosphorylation of KaiC slightly; quinones may interact in a complex manner with KaiA to mediate clock input. This Synechococcus elongatus (strain ATCC 33912 / PCC 7942 / FACHB-805) (Anacystis nidulans R2) protein is Circadian clock oscillator protein KaiA.